Reading from the N-terminus, the 360-residue chain is Phenylalanine--tRNA ligase alpha subunit (360 aa).

Glutamate 260 contacts Mg(2+).

The protein belongs to the class-II aminoacyl-tRNA synthetase family. Phe-tRNA synthetase alpha subunit type 1 subfamily. Tetramer of two alpha and two beta subunits. The cofactor is Mg(2+).

Its subcellular location is the cytoplasm. The catalysed reaction is tRNA(Phe) + L-phenylalanine + ATP = L-phenylalanyl-tRNA(Phe) + AMP + diphosphate + H(+). This Methylobacterium sp. (strain 4-46) protein is Phenylalanine--tRNA ligase alpha subunit.